A 332-amino-acid polypeptide reads, in one-letter code: Heterogeneous nuclear ribonucleoprotein A/B (332 aa).

Positions Met-1–Glu-66 are disordered. Residues Gly-29–Gly-49 show a composition bias toward low complexity. 2 consecutive RRM domains span residues Gly-69–Lys-154 and Lys-153–Glu-233. Phosphoserine is present on Ser-81. Residues Lys-130 and Lys-203 each participate in a glycyl lysine isopeptide (Lys-Gly) (interchain with G-Cter in SUMO2) cross-link. Lys-215 is modified (N6-acetyllysine). The disordered stretch occupies residues Tyr-235–Trp-268. Ser-242 carries the phosphoserine modification. Arg-245 bears the Dimethylated arginine; alternate mark. An Omega-N-methylarginine; alternate modification is found at Arg-245. Omega-N-methylarginine occurs at positions 250, 251, 253, and 254. The segment covering Arg-253–Gln-264 has biased composition (gly residues). Residues Ser-255 and Gly-256 each carry the phosphoserine modification. An N6-acetyllysine mark is found at Gly-271, Tyr-272, and Lys-318. A disordered region spans residues Gln-311–Tyr-332. Dimethylated arginine; alternate is present on Arg-322. Arg-322 carries the omega-N-methylarginine; alternate modification. An Asymmetric dimethylarginine; alternate modification is found at Arg-322.

In terms of assembly, identified in a IGF2BP1-dependent mRNP granule complex containing untranslated mRNAs. Interacts with APOBEC1. Post-translationally, dimethylation at Arg-322 is probably asymmetric. In terms of tissue distribution, ubiquitous.

The protein localises to the nucleus. Its subcellular location is the cytoplasm. Binds single-stranded RNA. Has a high affinity for G-rich and U-rich regions of hnRNA. Also binds to APOB mRNA transcripts around the RNA editing site. This chain is Heterogeneous nuclear ribonucleoprotein A/B (HNRNPAB), found in Homo sapiens (Human).